The chain runs to 1228 residues: Structural maintenance of chromosomes protein 1 (1228 aa).

32 to 39 contacts ATP; that stretch reads GPNGAGKS. The stretch at 197–510 forms a coiled coil; sequence NKKRGINAEL…ESKQDAKKRE (314 aa). An SMC hinge domain is found at 522-635; that stretch reads VKGRIIDLCT…CDSMTVARDL (114 aa). Coiled-coil stretches lie at residues 710–783, 814–926, and 984–1068; these read KLHS…KIFS, EFTK…EIDR, and VEVD…KRLQ.

Belongs to the SMC family. SMC1 subfamily. As to quaternary structure, cohesin complexes are composed of the psm1/smc1 and psm3/smc3 heterodimer attached via their SMC hinge domain, rad21/scc1 which link them, and psc3/scc3, which interacts with rad21.

The protein localises to the nucleus. Its subcellular location is the chromosome. In terms of biological role, involved in chromosome cohesion during cell cycle and in DNA repair. Central component of cohesin complex. The cohesin complex is required for the cohesion of sister chromatids after DNA replication. The cohesin complex apparently forms a large proteinaceous ring within which sister chromatids can be trapped. At anaphase, the complex is cleaved and dissociates from chromatin, allowing sister chromatids to segregate. In Schizosaccharomyces pombe (strain 972 / ATCC 24843) (Fission yeast), this protein is Structural maintenance of chromosomes protein 1 (psm1).